A 126-amino-acid chain; its full sequence is Holo-[acyl-carrier-protein] synthase (126 aa).

Mg(2+) contacts are provided by aspartate 9 and glutamate 58.

It belongs to the P-Pant transferase superfamily. AcpS family. Mg(2+) serves as cofactor.

It is found in the cytoplasm. The catalysed reaction is apo-[ACP] + CoA = holo-[ACP] + adenosine 3',5'-bisphosphate + H(+). Transfers the 4'-phosphopantetheine moiety from coenzyme A to a Ser of acyl-carrier-protein. In Salmonella paratyphi B (strain ATCC BAA-1250 / SPB7), this protein is Holo-[acyl-carrier-protein] synthase.